The primary structure comprises 428 residues: Histidine--tRNA ligase (428 aa).

It belongs to the class-II aminoacyl-tRNA synthetase family. In terms of assembly, homodimer.

It localises to the cytoplasm. The catalysed reaction is tRNA(His) + L-histidine + ATP = L-histidyl-tRNA(His) + AMP + diphosphate + H(+). This Halalkalibacterium halodurans (strain ATCC BAA-125 / DSM 18197 / FERM 7344 / JCM 9153 / C-125) (Bacillus halodurans) protein is Histidine--tRNA ligase.